A 130-amino-acid polypeptide reads, in one-letter code: B1 protein (130 aa).

Residues 1 to 12 (LTSLILLVAVQA) form the signal peptide. 2 cysteine pairs are disulfide-bonded: C28/C59 and C99/C116.

It belongs to the PBP/GOBP family. Post-translationally, N-glycosylated. In terms of tissue distribution, tubular accessory sex gland.

It is found in the secreted. May be a carrier protein for lipids. This is B1 protein from Tenebrio molitor (Yellow mealworm beetle).